Here is a 478-residue protein sequence, read N- to C-terminus: Membrane-bound lytic murein transglycosylase F (478 aa).

Residues 1-29 (MFPDSSYLFSMRSLSRFLIAIFGCGALLA) form the signal peptide. Residues 30 to 269 (SCDSFERSVL…RLLDRYYGHI (240 aa)) form a non-LT domain region. An LT domain region spans residues 271–478 (RLHHTDVNGI…RKEDDSWQEF (208 aa)). Glu-316 is a catalytic residue.

The protein in the N-terminal section; belongs to the bacterial solute-binding protein 3 family. It in the C-terminal section; belongs to the transglycosylase Slt family.

It localises to the cell outer membrane. It catalyses the reaction Exolytic cleavage of the (1-&gt;4)-beta-glycosidic linkage between N-acetylmuramic acid (MurNAc) and N-acetylglucosamine (GlcNAc) residues in peptidoglycan, from either the reducing or the non-reducing ends of the peptidoglycan chains, with concomitant formation of a 1,6-anhydrobond in the MurNAc residue.. Murein-degrading enzyme that degrades murein glycan strands and insoluble, high-molecular weight murein sacculi, with the concomitant formation of a 1,6-anhydromuramoyl product. Lytic transglycosylases (LTs) play an integral role in the metabolism of the peptidoglycan (PG) sacculus. Their lytic action creates space within the PG sacculus to allow for its expansion as well as for the insertion of various structures such as secretion systems and flagella. The sequence is that of Membrane-bound lytic murein transglycosylase F from Nitrosospira multiformis (strain ATCC 25196 / NCIMB 11849 / C 71).